We begin with the raw amino-acid sequence, 156 residues long: SCP2 sterol-binding domain-containing protein 1 (156 aa).

An SCP2 domain is found at 44–156; it reads SFPVFQDIRL…ERVFKDWAKF (113 aa).

This Homo sapiens (Human) protein is SCP2 sterol-binding domain-containing protein 1 (SCP2D1).